A 2581-amino-acid polypeptide reads, in one-letter code: Chromodomain-helicase-DNA-binding protein 8 (2581 aa).

3 disordered regions span residues 22 to 114 (DDSF…QTST), 253 to 281 (VKGSAPAGNPGATGPPLKPAVTLTSTPAQ), and 349 to 375 (QKIQIVPQPPSSQPQPQPPPSAQPLTL). Composition is skewed to polar residues over residues 42–64 (SLDSLDQMNQDGGSGDVGNSSAS) and 94–114 (DYTTQPTSQEQPAQPVLQTST). A compositionally biased stretch (low complexity) spans 255–267 (GSAPAGNPGATGP). A compositionally biased stretch (pro residues) spans 355–370 (PQPPSSQPQPQPPPSA). Ser-432 is subject to Phosphoserine. Disordered stretches follow at residues 473–584 (RARG…KRKK) and 596–616 (DEEEEEVDVTGPIKPEPILPE). Residues 493–516 (RPEEEGEKKRRKKSSGERLKEEKP) are compositionally biased toward basic and acidic residues. 2 positions are modified to phosphoserine: Ser-553 and Ser-562. Positions 572–584 (QKRRSNRQVKRKK) are enriched in basic residues. Lys-609 participates in a covalent cross-link: Glycyl lysine isopeptide (Lys-Gly) (interchain with G-Cter in SUMO). Chromo domains follow at residues 642–709 (AIVD…AQMR) and 724–790 (VEVD…RVNR). The 175-residue stretch at 823–997 (LFNWYNRQNC…FSLLHFLEPS (175 aa)) folds into the Helicase ATP-binding domain. Residue 836–843 (DEMGLGKT) coordinates ATP. A DEAH box motif is present at residues 948 to 951 (DEAH). The region spanning 1137–1288 (LIDKLLPKLK…KAVLQSMSGR (152 aa)) is the Helicase C-terminal domain. 2 positions are modified to phosphoserine: Ser-1420 and Ser-1424. Positions 1692 to 1713 (EDPEYKPLQGPPKDPDDEGDPL) are disordered. The interaction with FAM124B stretch occupies residues 1789–2302 (IARREKQQRW…LVELEVECME (514 aa)). A phosphoserine mark is found at Ser-1976 and Ser-1978. A disordered region spans residues 1988–2016 (QCTSRTASPSPLRPDVPAEKSPEENAVQV). Position 1993 is a phosphothreonine (Thr-1993). A phosphoserine mark is found at Ser-1995, Ser-1997, and Ser-2008. Residue Lys-2025 forms a Glycyl lysine isopeptide (Lys-Gly) (interchain with G-Cter in SUMO2) linkage. Disordered regions lie at residues 2047-2118 (SSDT…YDEE) and 2179-2221 (NRRS…SSSA). Acidic residues predominate over residues 2063–2072 (EDDDDSDSEL). Phosphoserine occurs at positions 2068 and 2070. Residues 2075-2094 (SKLSPSSSSSSSSSSSSSSS) show a composition bias toward low complexity. The span at 2102–2116 (EEKLTADRSRPKLYD) shows a compositional bias: basic and acidic residues. Phosphoserine is present on residues Ser-2182, Ser-2200, and Ser-2202. At Thr-2204 the chain carries Phosphothreonine. Ser-2211 carries the phosphoserine modification. At Thr-2215 the chain carries Phosphothreonine. Ser-2223 carries the phosphoserine modification. Lys-2256 participates in a covalent cross-link: Glycyl lysine isopeptide (Lys-Gly) (interchain with G-Cter in SUMO2). The disordered stretch occupies residues 2484 to 2581 (PHVDSSTMLH…NSDSSDDADD (98 aa)). The segment covering 2492–2510 (LHHHHHHPHPHHHHHHHPG) has biased composition (basic residues). Residues 2513–2528 (TTGYPSSPATTTSGTA) are compositionally biased toward low complexity. Phosphoserine is present on Ser-2519. Residues 2537-2550 (EDDDEEEDEDDDDL) are compositionally biased toward acidic residues. Residues 2565–2574 (DDPMMPANSD) are compositionally biased toward low complexity.

It belongs to the SNF2/RAD54 helicase family. CHD8 subfamily. Interacts with p53/TP53, histone H1 and CTCF. Component of some MLL1/MLL complex, at least composed of the core components KMT2A/MLL1, ASH2L, HCFC1/HCF1, WDR5 and RBBP5, as well as the facultative components BACC1, CHD8, E2F6, HSP70, INO80C, KANSL1, LAS1L, MAX, MCRS1, MGA, KAT8/MOF, PELP1, PHF20, PRP31, RING2, RUVB1/TIP49A, RUVB2/TIP49B, SENP3, TAF1, TAF4, TAF6, TAF7, TAF9 and TEX10. Interacts with CHD7. Interacts with FAM124B. Interacts with CTNNB1. Interacts with PIAS3. Interacts with TLK2. Interacts with HNRNPL in an RNA-dependent manner. Post-translationally, sumoylated.

The protein resides in the nucleus. It catalyses the reaction ATP + H2O = ADP + phosphate + H(+). ATP-dependent chromatin-remodeling factor, it slides nucleosomes along DNA; nucleosome sliding requires ATP. Acts as a transcription repressor by remodeling chromatin structure and recruiting histone H1 to target genes. Suppresses p53/TP53-mediated apoptosis by recruiting histone H1 and preventing p53/TP53 transactivation activity. Acts as a negative regulator of Wnt signaling pathway by regulating beta-catenin (CTNNB1) activity. Negatively regulates CTNNB1-targeted gene expression by being recruited specifically to the promoter regions of several CTNNB1 responsive genes. Involved in both enhancer blocking and epigenetic remodeling at chromatin boundary via its interaction with CTCF. Acts as a suppressor of STAT3 activity by suppressing the LIF-induced STAT3 transcriptional activity. Also acts as a transcription activator via its interaction with ZNF143 by participating in efficient U6 RNA polymerase III transcription. Regulates alternative splicing of a core group of genes involved in neuronal differentiation, cell cycle and DNA repair. Enables H3K36me3-coupled transcription elongation and co-transcriptional RNA processing likely via interaction with HNRNPL. The protein is Chromodomain-helicase-DNA-binding protein 8 of Rattus norvegicus (Rat).